The primary structure comprises 230 residues: tRNA (guanine-N(7)-)-methyltransferase (230 aa).

S-adenosyl-L-methionine contacts are provided by glutamate 61, glutamate 86, aspartate 113, and aspartate 135. Aspartate 135 is an active-site residue. Substrate contacts are provided by residues lysine 139, aspartate 171, and 209-212; that span reads TRYE.

It belongs to the class I-like SAM-binding methyltransferase superfamily. TrmB family.

The enzyme catalyses guanosine(46) in tRNA + S-adenosyl-L-methionine = N(7)-methylguanosine(46) in tRNA + S-adenosyl-L-homocysteine. The protein operates within tRNA modification; N(7)-methylguanine-tRNA biosynthesis. In terms of biological role, catalyzes the formation of N(7)-methylguanine at position 46 (m7G46) in tRNA. This chain is tRNA (guanine-N(7)-)-methyltransferase, found in Azorhizobium caulinodans (strain ATCC 43989 / DSM 5975 / JCM 20966 / LMG 6465 / NBRC 14845 / NCIMB 13405 / ORS 571).